Reading from the N-terminus, the 361-residue chain is Mannose-1-phosphate guanyltransferase 2 (361 aa).

This sequence belongs to the transferase hexapeptide repeat family.

Its subcellular location is the cytoplasm. The enzyme catalyses alpha-D-mannose 1-phosphate + GTP + H(+) = GDP-alpha-D-mannose + diphosphate. It participates in nucleotide-sugar biosynthesis; GDP-alpha-D-mannose biosynthesis; GDP-alpha-D-mannose from alpha-D-mannose 1-phosphate (GTP route): step 1/1. In terms of biological role, involved in cell wall synthesis where it is required for glycosylation. Involved in cell cycle progression through cell-size checkpoint. The chain is Mannose-1-phosphate guanyltransferase 2 (MPG1) from Candida glabrata (strain ATCC 2001 / BCRC 20586 / JCM 3761 / NBRC 0622 / NRRL Y-65 / CBS 138) (Yeast).